Reading from the N-terminus, the 317-residue chain is o-succinylbenzoate synthase (317 aa).

2-succinylbenzoate-binding positions include 71 to 73 (NAT) and lysine 95. Catalysis depends on lysine 97, which acts as the Proton donor. Positions 128, 154, and 177 each coordinate Mg(2+). A 2-succinylbenzoate-binding site is contributed by 128 to 130 (DVN). Lysine 201 contacts 2-succinylbenzoate. The active-site Proton acceptor is the lysine 201.

This sequence belongs to the mandelate racemase/muconate lactonizing enzyme family. MenC type 1 subfamily. As to quaternary structure, monomer. Requires a divalent metal cation as cofactor.

It carries out the reaction (1R,6R)-6-hydroxy-2-succinyl-cyclohexa-2,4-diene-1-carboxylate = 2-succinylbenzoate + H2O. The protein operates within quinol/quinone metabolism; 1,4-dihydroxy-2-naphthoate biosynthesis; 1,4-dihydroxy-2-naphthoate from chorismate: step 4/7. It participates in quinol/quinone metabolism; menaquinone biosynthesis. Converts 2-succinyl-6-hydroxy-2,4-cyclohexadiene-1-carboxylate (SHCHC) to 2-succinylbenzoate (OSB). Does not show N-succinylamino acid racemase (NSAR) activity with N-succinyl-L-phenylglycine as substrate. In Thermobifida fusca (strain YX), this protein is o-succinylbenzoate synthase.